The following is a 237-amino-acid chain: Phosphatidylserine decarboxylase proenzyme (237 aa).

Residue serine 206 is the Schiff-base intermediate with substrate; via pyruvic acid of the active site. A Pyruvic acid (Ser); by autocatalysis modification is found at serine 206.

This sequence belongs to the phosphatidylserine decarboxylase family. PSD-A subfamily. In terms of assembly, heterodimer of a large membrane-associated beta subunit and a small pyruvoyl-containing alpha subunit. It depends on pyruvate as a cofactor. Is synthesized initially as an inactive proenzyme. Formation of the active enzyme involves a self-maturation process in which the active site pyruvoyl group is generated from an internal serine residue via an autocatalytic post-translational modification. Two non-identical subunits are generated from the proenzyme in this reaction, and the pyruvate is formed at the N-terminus of the alpha chain, which is derived from the carboxyl end of the proenzyme. The post-translation cleavage follows an unusual pathway, termed non-hydrolytic serinolysis, in which the side chain hydroxyl group of the serine supplies its oxygen atom to form the C-terminus of the beta chain, while the remainder of the serine residue undergoes an oxidative deamination to produce ammonia and the pyruvoyl prosthetic group on the alpha chain.

Its subcellular location is the cell membrane. It catalyses the reaction a 1,2-diacyl-sn-glycero-3-phospho-L-serine + H(+) = a 1,2-diacyl-sn-glycero-3-phosphoethanolamine + CO2. The protein operates within phospholipid metabolism; phosphatidylethanolamine biosynthesis; phosphatidylethanolamine from CDP-diacylglycerol: step 2/2. Its function is as follows. Catalyzes the formation of phosphatidylethanolamine (PtdEtn) from phosphatidylserine (PtdSer). The chain is Phosphatidylserine decarboxylase proenzyme from Rhodococcus opacus (strain B4).